We begin with the raw amino-acid sequence, 232 residues long: MHIAEGFLPPAHAIAWGVASAPFVVHGVRSLTREVREHPESTLLLGASGAFTFVLSALKLPSVTGSCSHPTGTGLGAILFRPPIMAVLGTITLLFQALLLAHGGLTTLGANVFSMAIVGPWAGYGVYRLLRRWDVPLMVTVFFGAFVADLSTYCVTSVQLALAFPDPSSGFLGALGKFGSIFAVTQIPLAVSEGLLTVIVMRLLVQSSKGELTRLGVLLTRTGERKQEAVAR.

6 helical membrane passes run 6–26 (GFLPPAHAIAWGVASAPFVVH), 43–63 (LLLGASGAFTFVLSALKLPSV), 84–104 (IMAVLGTITLLFQALLLAHGG), 107–127 (TLGANVFSMAIVGPWAGYGVY), 135–155 (VPLMVTVFFGAFVADLSTYCV), and 181–201 (IFAVTQIPLAVSEGLLTVIVM).

This sequence belongs to the CbiM family. In terms of assembly, forms an energy-coupling factor (ECF) transporter complex composed of an ATP-binding protein (A component, CbiO), a transmembrane protein (T component, CbiQ) and 2 possible substrate-capture proteins (S components, CbiM and CbiN) of unknown stoichimetry.

The protein localises to the cell membrane. It functions in the pathway cofactor biosynthesis; adenosylcobalamin biosynthesis. Its function is as follows. Part of the energy-coupling factor (ECF) transporter complex CbiMNOQ involved in cobalt import. This chain is Cobalt transport protein CbiM, found in Streptomyces coelicolor (strain ATCC BAA-471 / A3(2) / M145).